Here is a 305-residue protein sequence, read N- to C-terminus: Glycine--tRNA ligase alpha subunit (305 aa).

This sequence belongs to the class-II aminoacyl-tRNA synthetase family. Tetramer of two alpha and two beta subunits.

Its subcellular location is the cytoplasm. It carries out the reaction tRNA(Gly) + glycine + ATP = glycyl-tRNA(Gly) + AMP + diphosphate. The protein is Glycine--tRNA ligase alpha subunit of Streptococcus pneumoniae (strain CGSP14).